The sequence spans 145 residues: uncharacterized protein (145 aa).

The first 20 residues, 1–20 (MPSKVCTLILLFSVINQMKC), serve as a signal peptide directing secretion.

This is an uncharacterized protein from Caenorhabditis elegans.